Reading from the N-terminus, the 201-residue chain is Molybdenum cofactor guanylyltransferase (201 aa).

Residues 14–16 (LAG), K31, and D104 each bind GTP. D104 contacts Mg(2+).

Belongs to the MobA family. As to quaternary structure, monomer. Requires Mg(2+) as cofactor.

It localises to the cytoplasm. It carries out the reaction Mo-molybdopterin + GTP + H(+) = Mo-molybdopterin guanine dinucleotide + diphosphate. Transfers a GMP moiety from GTP to Mo-molybdopterin (Mo-MPT) cofactor (Moco or molybdenum cofactor) to form Mo-molybdopterin guanine dinucleotide (Mo-MGD) cofactor. The sequence is that of Molybdenum cofactor guanylyltransferase from Helicobacter pylori (strain G27).